Here is a 473-residue protein sequence, read N- to C-terminus: Dol-P-Glc:Glc(2)Man(9)GlcNAc(2)-PP-Dol alpha-1,2-glucosyltransferase (473 aa).

Residues 1 to 6 (MAQLEG) are Cytoplasmic-facing. The chain crosses the membrane as a helical span at residues 7–27 (YYFSAALSCTFLVSCLLFSAF). Residues 28-64 (SRALREPYMDEIFHLPQAQRYCEGHFSLSQWDPMITT) lie on the Extracellular side of the membrane. Residues 65–85 (LPGLYLVSIGVIKPAIWIFGW) form a helical membrane-spanning segment. Residues 86 to 97 (SEHVVCSIGMLR) lie on the Cytoplasmic side of the membrane. Residues 98-118 (FVNLLFSVGNFYLLYLLFCKV) form a helical membrane-spanning segment. The Extracellular segment spans residues 119–130 (QPRNKAASSIQR). 2 helical membrane passes run 131 to 151 (VLSTLTLAVFPTLYFFNFLYY) and 152 to 172 (TEAGSMFFTLFAYLMCLYGNH). Over 173–175 (KTS) the chain is Extracellular. The chain crosses the membrane as a helical span at residues 176–196 (AFLGFCGFMFRQTNIIWAVFC). At 197–249 (AGNVIAQKLTEAWKTELQKKEDRLPPIKGPFAEFRKILQFLLAYSMSFKNLSM) the chain is on the cytoplasmic side. The helical transmembrane segment at 250 to 270 (LLLLTWPYILLGFLFCAFVVV) threads the bilayer. Over 271-283 (NGGIVIGDRSSHE) the chain is Extracellular. The helical transmembrane segment at 284–304 (ACLHFPQLFYFFSFTLFFSFP) threads the bilayer. The Cytoplasmic portion of the chain corresponds to 305–323 (HLLSPSKIKTFLSLVWKRR). The chain crosses the membrane as a helical span at residues 324 to 344 (ILFFVVTLVSVFLVWKFTYAH). Topologically, residues 345–367 (KYLLADNRHYTFYVWKRVFQRYE) are extracellular. Residues 368–388 (TVKYLLVPAYIFAGWSIADSL) form a helical membrane-spanning segment. Topologically, residues 389 to 392 (KSKS) are cytoplasmic. The chain crosses the membrane as a helical span at residues 393–413 (IFWNLMFFICLFTVIVPQKLL). Over 414 to 436 (EFRYFILPYVIYRLNIPLPPTSR) the chain is Extracellular. The helical transmembrane segment at 437 to 457 (LICELSCYAVVNFITFFIFLN) threads the bilayer. Residues 458 to 473 (KTFQWPNSQDIQRFMW) are Cytoplasmic-facing.

This sequence belongs to the ALG10 glucosyltransferase family.

It is found in the endoplasmic reticulum membrane. It carries out the reaction an alpha-D-Glc-(1-&gt;3)-alpha-D-Glc-(1-&gt;3)-alpha-D-Man-(1-&gt;2)-alpha-D-Man-(1-&gt;2)-alpha-D-Man-(1-&gt;3)-[alpha-D-Man-(1-&gt;2)-alpha-D-Man-(1-&gt;3)-[alpha-D-Man-(1-&gt;2)-alpha-D-Man-(1-&gt;6)]-alpha-D-Man-(1-&gt;6)]-beta-D-Man-(1-&gt;4)-beta-D-GlcNAc-(1-&gt;4)-alpha-D-GlcNAc-diphospho-di-trans,poly-cis-dolichol + a di-trans,poly-cis-dolichyl beta-D-glucosyl phosphate = a alpha-D-Glc-(1-&gt;2)-alpha-D-Glc-(1-&gt;3)-alpha-D-Glc-(1-&gt;3)-alpha-D-Man-(1-&gt;2)-alpha-D-Man-(1-&gt;2)-alpha-D-Man-(1-&gt;3)-[alpha-D-Man-(1-&gt;2)-alpha-D-Man-(1-&gt;3)-[alpha-D-Man-(1-&gt;2)-alpha-D-Man-(1-&gt;6)]-alpha-D-Man-(1-&gt;6)]-beta-D-Man-(1-&gt;4)-beta-D-GlcNAc-(1-&gt;4)-alpha-D-GlcNAc-diphospho-di-trans,poly-cis-dolichol + a di-trans,poly-cis-dolichyl phosphate + H(+). It participates in protein modification; protein glycosylation. In terms of biological role, dol-P-Glc:Glc(2)Man(9)GlcNAc(2)-PP-Dol alpha-1,2-glucosyltransferase that operates in the biosynthetic pathway of dolichol-linked oligosaccharides, the glycan precursors employed in protein asparagine (N)-glycosylation. The assembly of dolichol-linked oligosaccharides begins on the cytosolic side of the endoplasmic reticulum membrane and finishes in its lumen. The sequential addition of sugars to dolichol pyrophosphate produces dolichol-linked oligosaccharides containing fourteen sugars, including two GlcNAcs, nine mannoses and three glucoses. Once assembled, the oligosaccharide is transferred from the lipid to nascent proteins by oligosaccharyltransferases. In the lumen of the endoplasmic reticulum, adds the third and last glucose residue from dolichyl phosphate glucose (Dol-P-Glc) onto the lipid-linked oligosaccharide intermediate Glc(2)Man(9)GlcNAc(2)-PP-Dol to produce Glc(3)Man(9)GlcNAc(2)-PP-Dol. This chain is Dol-P-Glc:Glc(2)Man(9)GlcNAc(2)-PP-Dol alpha-1,2-glucosyltransferase, found in Homo sapiens (Human).